Reading from the N-terminus, the 491-residue chain is MSDLQANKDETTVDRQSSSSVDLDGPSPLRKMISVASIAAGIQFGWALQLSLLTPYVQLLGVPHKWPSFIWLCGPVSGLLVQPSVGYFSDRCTSRFGRRRPFIATGALLVAVSVVLIGYAADFGHSMGDKIDKPVKMRAVVIFALGFWILDVANNTLQGPCRAFLGDLAAGDAQKTRTANAFFSFFMAVGNVLGYAAGSYTNLYKIFPFTMTKACDIYCANLKSCFFLSITLLLVVTIIALWYVEDKQWSPKADSDNEKTPFFGEIFGAFKVMKRPMWMLLIVTALNWIAWFPFLLYDTDWMGREVYGGDSKGDDKMKKLYNQGIHVGALGLMLNSIVLGVMSLGIEGISRKMGGAKRLWGAVNIILAVCLAMTVLVTKKAEEHRRIAGPMALPTDGIRAGALTLFALLGIPLAITFSIPFALASIISSSSGAGQRLSLGVLNMAIVIPQMIVSFGVGPIDALFGDGNLPGFVVGAIAAAVSSIVAFTVLP.

The segment covering 1 to 13 has biased composition (basic and acidic residues); sequence MSDLQANKDETTV. A disordered region spans residues 1–25; sequence MSDLQANKDETTVDRQSSSSVDLDG. The Cytoplasmic portion of the chain corresponds to 1 to 32; the sequence is MSDLQANKDETTVDRQSSSSVDLDGPSPLRKM. At Ser-17 the chain carries Phosphoserine. The chain crosses the membrane as a helical span at residues 33–53; that stretch reads ISVASIAAGIQFGWALQLSLL. Topologically, residues 54-67 are extracellular; that stretch reads TPYVQLLGVPHKWP. Residues 68–88 form a helical membrane-spanning segment; the sequence is SFIWLCGPVSGLLVQPSVGYF. Residues 89-100 are Cytoplasmic-facing; the sequence is SDRCTSRFGRRR. The chain crosses the membrane as a helical span at residues 101-121; it reads PFIATGALLVAVSVVLIGYAA. Residues 122-138 are Extracellular-facing; the sequence is DFGHSMGDKIDKPVKMR. The chain crosses the membrane as a helical span at residues 139–159; the sequence is AVVIFALGFWILDVANNTLQG. Over 160–180 the chain is Cytoplasmic; sequence PCRAFLGDLAAGDAQKTRTAN. The chain crosses the membrane as a helical span at residues 181–201; the sequence is AFFSFFMAVGNVLGYAAGSYT. Residues 202–223 are Extracellular-facing; sequence NLYKIFPFTMTKACDIYCANLK. A helical transmembrane segment spans residues 224-244; sequence SCFFLSITLLLVVTIIALWYV. The Cytoplasmic segment spans residues 245–276; it reads EDKQWSPKADSDNEKTPFFGEIFGAFKVMKRP. The helical transmembrane segment at 277 to 297 threads the bilayer; the sequence is MWMLLIVTALNWIAWFPFLLY. At 298 to 323 the chain is on the extracellular side; that stretch reads DTDWMGREVYGGDSKGDDKMKKLYNQ. Residues 324–344 form a helical membrane-spanning segment; the sequence is GIHVGALGLMLNSIVLGVMSL. Topologically, residues 345 to 358 are cytoplasmic; the sequence is GIEGISRKMGGAKR. A helical membrane pass occupies residues 359–379; sequence LWGAVNIILAVCLAMTVLVTK. The Extracellular segment spans residues 380–402; sequence KAEEHRRIAGPMALPTDGIRAGA. A helical transmembrane segment spans residues 403–423; sequence LTLFALLGIPLAITFSIPFAL. At 424-443 the chain is on the cytoplasmic side; that stretch reads ASIISSSSGAGQRLSLGVLN. The chain crosses the membrane as a helical span at residues 444–464; sequence MAIVIPQMIVSFGVGPIDALF. Residues 465-468 lie on the Extracellular side of the membrane; that stretch reads GDGN. A helical transmembrane segment spans residues 469–489; the sequence is LPGFVVGAIAAAVSSIVAFTV. At 490-491 the chain is on the cytoplasmic side; that stretch reads LP.

Belongs to the glycoside-pentoside-hexuronide (GPH) cation symporter transporter (TC 2.A.2.4) family. In terms of tissue distribution, expressed in anthers.

The protein localises to the cell membrane. It functions in the pathway glycan biosynthesis; sucrose metabolism. May be responsible for the transport of glucosides into the cell, with the concomitant uptake of protons (symport system). Does not seem to transport sucrose. This is Sucrose transport protein SUC7 from Arabidopsis thaliana (Mouse-ear cress).